We begin with the raw amino-acid sequence, 357 residues long: Phosphoserine aminotransferase (357 aa).

Arginine 41 provides a ligand contact to L-glutamate. Pyridoxal 5'-phosphate contacts are provided by residues 76–77 (GT), tryptophan 102, threonine 152, aspartate 171, and glutamine 194. Lysine 195 carries the post-translational modification N6-(pyridoxal phosphate)lysine. 235–236 (NT) is a pyridoxal 5'-phosphate binding site.

It belongs to the class-V pyridoxal-phosphate-dependent aminotransferase family. SerC subfamily. As to quaternary structure, homodimer. Pyridoxal 5'-phosphate is required as a cofactor.

It is found in the cytoplasm. The catalysed reaction is O-phospho-L-serine + 2-oxoglutarate = 3-phosphooxypyruvate + L-glutamate. It catalyses the reaction 4-(phosphooxy)-L-threonine + 2-oxoglutarate = (R)-3-hydroxy-2-oxo-4-phosphooxybutanoate + L-glutamate. It participates in amino-acid biosynthesis; L-serine biosynthesis; L-serine from 3-phospho-D-glycerate: step 2/3. Its function is as follows. Catalyzes the reversible conversion of 3-phosphohydroxypyruvate to phosphoserine and of 3-hydroxy-2-oxo-4-phosphonooxybutanoate to phosphohydroxythreonine. The sequence is that of Phosphoserine aminotransferase from Limosilactobacillus fermentum (strain NBRC 3956 / LMG 18251) (Lactobacillus fermentum).